The primary structure comprises 234 residues: Leucyl/phenylalanyl-tRNA--protein transferase (234 aa).

This sequence belongs to the L/F-transferase family.

The protein localises to the cytoplasm. The catalysed reaction is N-terminal L-lysyl-[protein] + L-leucyl-tRNA(Leu) = N-terminal L-leucyl-L-lysyl-[protein] + tRNA(Leu) + H(+). It carries out the reaction N-terminal L-arginyl-[protein] + L-leucyl-tRNA(Leu) = N-terminal L-leucyl-L-arginyl-[protein] + tRNA(Leu) + H(+). It catalyses the reaction L-phenylalanyl-tRNA(Phe) + an N-terminal L-alpha-aminoacyl-[protein] = an N-terminal L-phenylalanyl-L-alpha-aminoacyl-[protein] + tRNA(Phe). In terms of biological role, functions in the N-end rule pathway of protein degradation where it conjugates Leu, Phe and, less efficiently, Met from aminoacyl-tRNAs to the N-termini of proteins containing an N-terminal arginine or lysine. This chain is Leucyl/phenylalanyl-tRNA--protein transferase, found in Shigella sonnei (strain Ss046).